Consider the following 343-residue polypeptide: Putative trace amine-associated receptor 3 (343 aa).

Topologically, residues 1–35 (MDLTYIPEDLSSCPKFVNKILSSHQPLFSCPGDNV) are extracellular. The helical transmembrane segment at 36–56 (FGYDWSHDYPLFGNLVIMVSI) threads the bilayer. Over 57–68 (SHFKQLHSPTNF) the chain is Cytoplasmic. Residues 69–89 (LILSMATTDFLLGFVIMPYSI) form a helical membrane-spanning segment. At 90–150 (MRSVESCWYF…TKMTNSTIKQ (61 aa)) the chain is on the extracellular side. A disulfide bond links cysteine 104 and cysteine 189. N-linked (GlcNAc...) asparagine glycosylation occurs at asparagine 145. A helical transmembrane segment spans residues 151–168 (LLAFCWSVPALFSFGLVL). The Cytoplasmic segment spans residues 169–172 (SEAD). The tract at residues 173–186 (VSGMQSYKILVACF) is extracellular Loop 2 (ECL2). Residues 173 to 193 (VSGMQSYKILVACFNFCALTF) form a helical membrane-spanning segment. The Extracellular portion of the chain corresponds to 194-198 (NKFWG). The helical transmembrane segment at 199–223 (TILFTTCFFTPGSIMVGIYGKIFIV) threads the bilayer. Topologically, residues 224–257 (SKQHARVISHVPENTKGAVKKHLSKKKDRKAAKT) are cytoplasmic. The chain crosses the membrane as a helical span at residues 258 to 278 (LGIVMGVFLACWLPCFLAVLI). The Extracellular portion of the chain corresponds to 279-287 (DPYLDYSTP). A helical membrane pass occupies residues 288–308 (ILILDLLVWLRYFNSTCNPLI). Over 309–343 (HGFFNPWFQKAFKYIVSGKIFSSHSETANLFPEAH) the chain is Cytoplasmic.

This sequence belongs to the G-protein coupled receptor 1 family. In terms of tissue distribution, not expressed in the pons, thalamus, globus pallidus, caudate, putamen or cerebellum.

Its subcellular location is the cell membrane. Functionally, putative olfactory receptor activated by several primary trace amines. This Homo sapiens (Human) protein is Putative trace amine-associated receptor 3.